Consider the following 312-residue polypeptide: Aquaporin Lacbi1:391485 (312 aa).

Residues 1 to 50 (MDDKFDDDALPNSKTTPEDYGDKLAEYDYTNTFPNTWMRLREPFREYIAE) are Cytoplasmic-facing. A helical transmembrane segment spans residues 51-71 (FVGVAVLIIFGVGADCQVVLS). The Extracellular portion of the chain corresponds to 72 to 89 (ANTGVAPSPKGDYLSLNC). A helical transmembrane segment spans residues 90-110 (GWAIGTAMGVWISGGISGGHI). Positions 111 to 113 (NPA) match the NPA 1 motif. Residues 111–128 (NPAVTLALMAWRGFPWWK) lie on the Cytoplasmic side of the membrane. A helical transmembrane segment spans residues 129-149 (VPGFIFAQLLGGIVGAGLVYV). Over 150 to 183 (NYIHAIDIVEGGRHIRTLDTAGLFATYAADYMTN) the chain is Extracellular. An N-linked (GlcNAc...) asparagine glycan is attached at N183. A helical membrane pass occupies residues 184–204 (VSCFFSEFLATAVLIVVIHAM). The Cytoplasmic segment spans residues 205–213 (NDKRNAPPP). The helical transmembrane segment at 214-234 (AGLAPLVLFFLILGIGASLGM) threads the bilayer. Residues 235-267 (ETGYAINPARDLGPRMLTAMVGYGRQVFAFRNQ) are Extracellular-facing. The NPA 2 motif lies at 241–243 (NPA). A helical transmembrane segment spans residues 268 to 288 (YWIWCPVIAPFLGAQVGTIFY). Residues 289 to 312 (DLFFYKGQDNVFGRLGSHIHISPA) are Cytoplasmic-facing.

Belongs to the MIP/aquaporin (TC 1.A.8) family.

The protein resides in the membrane. It catalyses the reaction H2O(in) = H2O(out). The catalysed reaction is glycerol(in) = glycerol(out). It carries out the reaction NH4(+)(in) = NH4(+)(out). Water channel required to facilitate the transport of water across membranes. In addition to water, also shows strong glycerol and ammonium transport activities. May be involved in fungal nitrogen (ammonium) support of the plant host in symbiosis. Glycerol accumulation has never been observed in ectomycorrhizal (ECM) fungi, therefore, glycerol permeability of Lacbi1:391485 might be a relict of the affiliation of the protein to the group of aquaglyceroporins, and other osmotic active compounds (e.g. trehalose or mannitol) may have taken over glycerol function in ECM fungi. This chain is Aquaporin Lacbi1:391485, found in Laccaria bicolor (strain S238N-H82 / ATCC MYA-4686) (Bicoloured deceiver).